The primary structure comprises 477 residues: MKVTLPDFRRAQVLVVGDVMLDRYWYGPTSRISPEAPVPVVKVETIEERPGGAANVAMNIASLGASARLVGLTGVDDAARALSTRLDEVHVECDFVAIPAQPTITKLRVLSRNQQLIRLDFEEGFGGVDPGPILARIRQALPQVGAVILSDYAKGALASVQAMICLARDAGVPVLIDPKGTDFERYRGATLLTPNLSEFEAVVGRCHSEQEIVDRGLALMERFDLTALLVTRSEQGMTLLQRGIAPLHMPTQAQEVYDVTGAGDTVIGMLAASIAAGASLDEACFLANAAAGVVVGKLGTSTVSPIELENAIRGRADTGFGVMTQEELKTAVLQARQRGEKVVMTNGVFDILHAGHVSYLANARRLGDRLIVAVNSDASTSRLKGPERPVNPLVQRMLVLAALEAVDWVIPFEEDTPQRIIAEILPDLLVKGGDYKPEEIAGGKEVIAAGGEVRVLNFEDGCSTSNIINIIRQGQND.

The ribokinase stretch occupies residues Met1 to Thr318. Asn195–Glu198 lines the ATP pocket. The active site involves Asp264. Residues Met344–Asp477 are cytidylyltransferase.

It in the N-terminal section; belongs to the carbohydrate kinase PfkB family. This sequence in the C-terminal section; belongs to the cytidylyltransferase family. In terms of assembly, homodimer.

It catalyses the reaction D-glycero-beta-D-manno-heptose 7-phosphate + ATP = D-glycero-beta-D-manno-heptose 1,7-bisphosphate + ADP + H(+). The enzyme catalyses D-glycero-beta-D-manno-heptose 1-phosphate + ATP + H(+) = ADP-D-glycero-beta-D-manno-heptose + diphosphate. Its pathway is nucleotide-sugar biosynthesis; ADP-L-glycero-beta-D-manno-heptose biosynthesis; ADP-L-glycero-beta-D-manno-heptose from D-glycero-beta-D-manno-heptose 7-phosphate: step 1/4. It participates in nucleotide-sugar biosynthesis; ADP-L-glycero-beta-D-manno-heptose biosynthesis; ADP-L-glycero-beta-D-manno-heptose from D-glycero-beta-D-manno-heptose 7-phosphate: step 3/4. Functionally, catalyzes the phosphorylation of D-glycero-D-manno-heptose 7-phosphate at the C-1 position to selectively form D-glycero-beta-D-manno-heptose-1,7-bisphosphate. Catalyzes the ADP transfer from ATP to D-glycero-beta-D-manno-heptose 1-phosphate, yielding ADP-D-glycero-beta-D-manno-heptose. The protein is Bifunctional protein HldE of Edwardsiella ictaluri (strain 93-146).